Here is a 116-residue protein sequence, read N- to C-terminus: Non-specific lipid-transfer protein D, cotyledon-specific isoform (116 aa).

The signal sequence occupies residues 1–24 (MKNIFFSVFFLLSFLLCLANVSEA). 4 disulfide bridges follow: Cys-28/Cys-76, Cys-38/Cys-53, Cys-54/Cys-98, and Cys-74/Cys-112.

Belongs to the plant LTP family.

Its function is as follows. Plant non-specific lipid-transfer proteins transfer phospholipids as well as galactolipids across membranes. May play a role in wax or cutin deposition in the cell walls of expanding epidermal cells and certain secretory tissues. This chain is Non-specific lipid-transfer protein D, cotyledon-specific isoform, found in Ricinus communis (Castor bean).